The primary structure comprises 1768 residues: MAATSQVSSLLDLIMSLLDTATTYQHQESVKNEVAESLKTIGSHQPNVLLTACHQYLLQNPKLGAFKRAFVLQTISICVDNCEVVSKLDEQIIMLIINLATQEMNMTKDTDVEWAESSMEVLVTLAKNTRFVSHVIDAILQKFPPGQTTSPHRYIVLTMATIAVHNPFGLVPFLTDILSRTVPLLQHVKTDPLRCAWARAICSFCEAVRECETERPKEASEEYIGDHSRPNSASGHCQEVSNRATYSDQTEAVYDVIFSWIYSKDPKTRGEAAECVGELCLMIKQTRLVEDVKKIVTNMIPLYRKSYNESHMITQGICRFLEAACVDETCPLEPYLEDILNALFPNACLDPDDTTVTLSTQAIKNHSEAFRCFDVAATRFADRIVYYLLHKMQNVADSQKLGAINVLRHLLNATGQHMEDKRSLLTMGLKKLLAAENTTSIRVKRAIVQLCVALADHSYVDAEGGDYVIAFLVRNLVGPTEQESAAKKVEVDVAGLNQLRTQCAQALYTIANTCVCATKLLWPYLLEFICCERYTPVVGDLCKCLRTLVSREVEAGRKMDYVTGFDNPKVAGRHAVFARLFTSFCNAPLNGLLTRRAREAGGLIQAVAPWFHPSMEGPAARWSEKLEPLLDELSTTVSSGDSAPAELRGRKIARWHEACLDWLSACVAVVPEGDWRQDLAAAMGKQLDMYKELSDEKSFLLRCLGVTLARITAKQFVIDHMMLMFKSASHSVLTERQGCARGVGSIATSHMDLILIELENVSKWEHARKSSGIFGFIKDTMPIRQYPDIEMIHLRATLMLCYGHVVMACSLDTITQRLQNTIIVFLRNYFANSKQETVVREAMLETMRLIATAVHPSRIGGEWKFEARNELLAYAKDYLNGETPEWLTSSLRLLACKTTAALVQLEPPLSPADIEDIGTVLTRQILPMQREKSGLKTLAFDIFDYASSSVFSTFSGSSSSHTNIYMTPPLTANSVAEGPNGTPIHQRHRGIGGKMEDDESATIMDATMHQYGLALEQIVRMAPTTQTIMILLKILLPYYGKQADHERIRAVDMTVLVLRVYYECAEDISLGHASDFEPLSSLLGRLAPRLIDLLAHVRLQALSAIHWTLRLAYMHKGHGRDADQSLFSYSGFVEKYLTSGDVKLEGQKEKLAIEAIAQIIEYRLPQSQMQIYLSAIFEMLTDRQSHVSSAAAQLLTYAVMARGATLNAEAEILVTKMVEKLADIHHCVQTNTDVLAALVAFAVHQQQAVCDVLFKQPLPYSINITDAWECLSRDKLLFAVILDHLTELLGASLDQPFELMDSGGGVSAKVVNVEPCTYVAVLAEVVKNGEPESALMERLPLILTLLIHFICSVSDTQFPVMQKEGSKNPLIITPDLRRAAEKPAGMAVAAIKNLLNRTRSNMVIEDMNQARAWTDCLDKDSFIQAITVFIRSLVEQRPAWVSPLAKTMEEYANSESEPRRLAAVIIAASLIRRSTSENGEFNEQLLVKCIRRLEDSLTDPSLRIRKLCVKGLGELSECSSTDVISRFVHMAVEAAMSGLDDHGDRKDTVAIESIMALNKLVQLTNNDQLKSILPLVLLKIRPCFEKDSHTLRAASFSLFGELGSRVGENSEEFRGHLHTNIVSLLLHLNDDFEEVRQNCANSIYRLHGLLTSPNASICIERELKDGKQPASYNLFIKDFASILANSFPDRINQYALATSNYFKSSSARIRCNAAHLTGCLLDGLTAPLRATISRELVFTGLVALLKDSEDVNVRISATRAIANLHDFH.

6 HEAT repeats span residues 4–47, 164–203, 816–856, 1166–1204, 1483–1521, and 1731–1768; these read TSQV…HQPN, VHNPFGLVPFLTDILSRTVPLLQHVKTDPLRCAWARAICS, QRLQ…AVHP, QSQMQIYLSAIFEMLTDRQSHVSSAAAQLLTYAVMARGA, EQLLVKCIRRLEDSLTDPSLRIRKLCVKGLGELSECSST, and TISRELVFTGLVALLKDSEDVNVRISATRAIANLHDFH.

This sequence belongs to the MROH1 family. Homooligomer; homooligomerizes at lysosome scission sites.

It localises to the lysosome membrane. Functionally, lysosome fission factor. Recruited to lysosomes by rab-7 at scission sites and homooligomerizes to mediate the constriction and scission of lysosomal tubules. May sever membranes by inserting amphipathic helices into one bilayer leaflet. Lysosome fission is required to maintain their steady-state number, shape, size, composition and function, and to accomplish regeneration. This chain is Maestro heat-like repeat-containing protein family member 1 homolog, found in Caenorhabditis elegans.